Here is a 571-residue protein sequence, read N- to C-terminus: Urease subunit alpha (571 aa).

The Urease domain occupies 133–571; the sequence is GGIDTHVHFI…LPLTQRYFLF (439 aa). Ni(2+) contacts are provided by His-138, His-140, and Lys-221. Lys-221 carries the post-translational modification N6-carboxylysine. His-223 provides a ligand contact to substrate. The Ni(2+) site is built by His-250 and His-276. Catalysis depends on His-324, which acts as the Proton donor. Asp-364 is a binding site for Ni(2+).

This sequence belongs to the metallo-dependent hydrolases superfamily. Urease alpha subunit family. As to quaternary structure, heterotrimer of UreA (gamma), UreB (beta) and UreC (alpha) subunits. Three heterotrimers associate to form the active enzyme. Ni cation serves as cofactor. In terms of processing, carboxylation allows a single lysine to coordinate two nickel ions.

It localises to the cytoplasm. The enzyme catalyses urea + 2 H2O + H(+) = hydrogencarbonate + 2 NH4(+). It participates in nitrogen metabolism; urea degradation; CO(2) and NH(3) from urea (urease route): step 1/1. This Staphylococcus aureus (strain USA300) protein is Urease subunit alpha.